The sequence spans 455 residues: Bifunctional protein GlmU (455 aa).

Residues 1 to 229 (MSKKVMSVVI…LNEIEGINDG (229 aa)) are pyrophosphorylase. UDP-N-acetyl-alpha-D-glucosamine contacts are provided by residues 11-14 (LAAG), lysine 25, glutamine 76, 81-82 (GT), 103-105 (YGD), glycine 140, glutamate 154, asparagine 169, and asparagine 227. A Mg(2+)-binding site is contributed by aspartate 105. Residue asparagine 227 participates in Mg(2+) binding. Residues 230–250 (LQLARLERLFQKQQAEKLLLS) are linker. Positions 251-455 (GVRILDPARF…IQGWKRPKKT (205 aa)) are N-acetyltransferase. UDP-N-acetyl-alpha-D-glucosamine is bound by residues arginine 333 and lysine 351. Histidine 363 acts as the Proton acceptor in catalysis. UDP-N-acetyl-alpha-D-glucosamine contacts are provided by tyrosine 366 and asparagine 377. Acetyl-CoA is bound by residues alanine 380, 386–387 (NY), serine 405, alanine 423, and arginine 440.

It in the N-terminal section; belongs to the N-acetylglucosamine-1-phosphate uridyltransferase family. This sequence in the C-terminal section; belongs to the transferase hexapeptide repeat family. As to quaternary structure, homotrimer. Mg(2+) serves as cofactor.

It is found in the cytoplasm. The enzyme catalyses alpha-D-glucosamine 1-phosphate + acetyl-CoA = N-acetyl-alpha-D-glucosamine 1-phosphate + CoA + H(+). The catalysed reaction is N-acetyl-alpha-D-glucosamine 1-phosphate + UTP + H(+) = UDP-N-acetyl-alpha-D-glucosamine + diphosphate. It participates in nucleotide-sugar biosynthesis; UDP-N-acetyl-alpha-D-glucosamine biosynthesis; N-acetyl-alpha-D-glucosamine 1-phosphate from alpha-D-glucosamine 6-phosphate (route II): step 2/2. The protein operates within nucleotide-sugar biosynthesis; UDP-N-acetyl-alpha-D-glucosamine biosynthesis; UDP-N-acetyl-alpha-D-glucosamine from N-acetyl-alpha-D-glucosamine 1-phosphate: step 1/1. It functions in the pathway bacterial outer membrane biogenesis; LPS lipid A biosynthesis. In terms of biological role, catalyzes the last two sequential reactions in the de novo biosynthetic pathway for UDP-N-acetylglucosamine (UDP-GlcNAc). The C-terminal domain catalyzes the transfer of acetyl group from acetyl coenzyme A to glucosamine-1-phosphate (GlcN-1-P) to produce N-acetylglucosamine-1-phosphate (GlcNAc-1-P), which is converted into UDP-GlcNAc by the transfer of uridine 5-monophosphate (from uridine 5-triphosphate), a reaction catalyzed by the N-terminal domain. In Hamiltonella defensa subsp. Acyrthosiphon pisum (strain 5AT), this protein is Bifunctional protein GlmU.